A 323-amino-acid polypeptide reads, in one-letter code: Elongation factor P--(R)-beta-lysine ligase (323 aa).

76–78 provides a ligand contact to substrate; sequence SPE. ATP is bound by residues 100–102 and asparagine 109; that span reads RNE. Substrate is bound at residue tyrosine 118. ATP is bound at residue 242–243; it reads EL. Glutamate 249 contributes to the substrate binding site. Position 298 (glycine 298) interacts with ATP.

This sequence belongs to the class-II aminoacyl-tRNA synthetase family. EpmA subfamily. As to quaternary structure, homodimer.

The enzyme catalyses D-beta-lysine + L-lysyl-[protein] + ATP = N(6)-((3R)-3,6-diaminohexanoyl)-L-lysyl-[protein] + AMP + diphosphate + H(+). Its function is as follows. With EpmB is involved in the beta-lysylation step of the post-translational modification of translation elongation factor P (EF-P). Catalyzes the ATP-dependent activation of (R)-beta-lysine produced by EpmB, forming a lysyl-adenylate, from which the beta-lysyl moiety is then transferred to the epsilon-amino group of a conserved specific lysine residue in EF-P. The protein is Elongation factor P--(R)-beta-lysine ligase of Haemophilus influenzae (strain PittGG).